The following is a 632-amino-acid chain: Cleavage stimulation factor subunit 2 tau variant (632 aa).

The region spanning 16–94 (RSVFVGNIPY…RALRVDNAAS (79 aa)) is the RRM domain. Disordered stretches follow at residues 201 to 296 (IPGK…PGGA) and 365 to 433 (YMGP…TRPM). Residues 213 to 233 (PGGPGPSGPGGPGPGPAPGLC) show a composition bias toward pro residues. Residues 234–244 (PGPNVMLNQQN) are compositionally biased toward low complexity. The segment covering 275–287 (APGPIPAAVPGPG) has biased composition (pro residues). Positions 365-375 (YMGPPHQGPPM) are enriched in low complexity. Basic and acidic residues-rich tracts occupy residues 377 to 390 (HGHDNRGPASHDMR) and 420 to 433 (RGGRESRGMETRPM). The 1-1; approximate repeat unit spans residues 428-432 (METRP). Residues 428–466 (METRPMETEVLEPRGMERRMETCAMETRGMDARGLEMRG) are 8 X 5 AA tandem repeats of M-E-T-R-[AG]. A 1-2; approximate repeat occupies 433-437 (METEV). The 1-3; approximate repeat unit spans residues 438–442 (LEPRG). The stretch at 443–446 (MERR) is one 1-4; approximate repeat. The 1-5; approximate repeat unit spans residues 447-451 (METCA). Residues 452 to 456 (METRG) form a 1-6 repeat. The 1-7; approximate repeat unit spans residues 457 to 461 (MDARG). Residues 462–466 (LEMRG) form a 1-8; approximate repeat. The stretch at 508 to 512 (GGTMQ) is one 2-1; approximate repeat. The 12 X 5 AA tandem repeats of G-[AT]-G-[MI]-Q stretch occupies residues 508 to 565 (GGTMQGAGIQGGGMQGAGMQGGGMQGAGMQGGGMQGAGMQAGMQGASMQGGMQGAGMQ). The stretch at 513–517 (GAGIQ) is one 2-2 repeat. A 2-3; approximate repeat occupies 518–522 (GGGMQ). Over residues 519–543 (GGMQGAGMQGGGMQGAGMQGGGMQG) the composition is skewed to gly residues. The interval 519–590 (GGMQGAGMQG…GQSQVTPQDQ (72 aa)) is disordered. One copy of the 2-4 repeat lies at 523–527 (GAGMQ). The 2-5; approximate repeat unit spans residues 528–532 (GGGMQ). A 2-6 repeat occupies 533–537 (GAGMQ). The 2-7; approximate repeat unit spans residues 538–542 (GGGMQ). The 2-8 repeat unit spans residues 543–547 (GAGMQ). Residues 544–557 (AGMQAGMQGASMQG) show a composition bias toward low complexity. A 2-9; approximate repeat occupies 548 to 551 (AGMQ). One copy of the 2-10; approximate repeat lies at 552–556 (GASMQ). The 2-11; approximate repeat unit spans residues 557-560 (GGMQ). Gly residues predominate over residues 558–574 (GMQGAGMQGASKQGGGQ). A 2-12 repeat occupies 561–565 (GAGMQ). Over residues 575 to 584 (PSSFSPGQSQ) the composition is skewed to low complexity. Residue Ser579 is modified to Phosphoserine.

As to expression, expressed in testes, where it is restricted to pachytene spermatocytes and spermatids, and in the brain (at protein level).

The protein localises to the nucleus. May play a significant role in AAUAAA-independent mRNA polyadenylation in germ cells. Directly involved in the binding to pre-mRNAs. The chain is Cleavage stimulation factor subunit 2 tau variant (Cstf2t) from Mus musculus (Mouse).